The following is a 202-amino-acid chain: Small ribosomal subunit protein uS4c (202 aa).

One can recognise an S4 RNA-binding domain in the interval 90–153 (MRLDNIIFRL…KSEAIISKNI (64 aa)).

It belongs to the universal ribosomal protein uS4 family. In terms of assembly, part of the 30S ribosomal subunit. Contacts protein S5. The interaction surface between S4 and S5 is involved in control of translational fidelity.

It is found in the plastid. It localises to the chloroplast. One of the primary rRNA binding proteins, it binds directly to 16S rRNA where it nucleates assembly of the body of the 30S subunit. In terms of biological role, with S5 and S12 plays an important role in translational accuracy. The polypeptide is Small ribosomal subunit protein uS4c (rps4) (Hookeria lucens (Moss)).